The sequence spans 555 residues: MDKRHDPSRRIIAPHGTRLSCKSWLTEAPMRMLMNNLHPDVAERPEDLVVYGGIGRAARDWDCYDKIIEVLQRLEDDETLLVQSGKPVGVFRTHADAPRVLIANSNLVPHWANWEHFNELDKLGLAMYGQMTAGSWIYIGTQGIVQGTYETFVSVAKQHFEGISKGKWILTGGLGGMGGAQTLAGTMAGFSVLACEVDETRIDFRLRTRYVDKKATSLDEALAMIEEANQAGKPVSVGLLANAADVFAELVKRGVTPDVVTDQTSAHDPLNGYLPQGWTMAEAAAMRKTDEAGVVKAAKASMAVQVQAMLDLQTAGAATLDYGNNIRQMAFEVGVENAFDFPGFVPAYIRPLFCEGIGPFRWVALSGDPEDIYKTDAKVKELIPDNPHLHNWLDMARERIAFQGLPARICWVGLKDRARLALAFNEMVKNGELSAPVVIGRDHLDSGSVASPNRETESMLDGSDAVSDWPLLNALLNTASGATWVSLHHGGGVGMGFSQHSGVVIVCDGTDAAAKRVGRVLWNDPATGVMRHADAGYEIAKNCAKEQGLDLPMQE.

NAD(+) is bound by residues 52-53, Gln-130, 176-178, Glu-196, Arg-201, 242-243, 263-267, 273-274, and Tyr-322; these read GG, GMG, NA, QTSAH, and YL. Cys-410 is an active-site residue. An NAD(+)-binding site is contributed by Gly-492.

This sequence belongs to the urocanase family. The cofactor is NAD(+).

Its subcellular location is the cytoplasm. It carries out the reaction 4-imidazolone-5-propanoate = trans-urocanate + H2O. It functions in the pathway amino-acid degradation; L-histidine degradation into L-glutamate; N-formimidoyl-L-glutamate from L-histidine: step 2/3. Functionally, catalyzes the conversion of urocanate to 4-imidazolone-5-propionate. This chain is Urocanate hydratase, found in Shewanella baltica (strain OS223).